A 333-amino-acid polypeptide reads, in one-letter code: Transaldolase NQM1 (333 aa).

Lysine 144 serves as the catalytic Schiff-base intermediate with substrate.

It belongs to the transaldolase family. Type 1 subfamily. As to quaternary structure, homodimer.

It catalyses the reaction D-sedoheptulose 7-phosphate + D-glyceraldehyde 3-phosphate = D-erythrose 4-phosphate + beta-D-fructose 6-phosphate. It functions in the pathway carbohydrate degradation; pentose phosphate pathway; D-glyceraldehyde 3-phosphate and beta-D-fructose 6-phosphate from D-ribose 5-phosphate and D-xylulose 5-phosphate (non-oxidative stage): step 2/3. Functionally, transaldolase is important for the balance of metabolites in the pentose-phosphate pathway. This chain is Transaldolase NQM1 (NQM1), found in Saccharomyces cerevisiae (strain ATCC 204508 / S288c) (Baker's yeast).